We begin with the raw amino-acid sequence, 253 residues long: ATP synthase subunit b 1 (253 aa).

Residues 2-22 (LIDWFTVIAELVNFLILVWLL) form a helical membrane-spanning segment.

Belongs to the ATPase B chain family. F-type ATPases have 2 components, F(1) - the catalytic core - and F(0) - the membrane proton channel. F(1) has five subunits: alpha(3), beta(3), gamma(1), delta(1), epsilon(1). F(0) has four main subunits: a(1), b(2) and c(10-14). The alpha and beta chains form an alternating ring which encloses part of the gamma chain. F(1) is attached to F(0) by a central stalk formed by the gamma and epsilon chains, while a peripheral stalk is formed by the delta and b chains.

It is found in the cell inner membrane. Its function is as follows. F(1)F(0) ATP synthase produces ATP from ADP in the presence of a proton or sodium gradient. F-type ATPases consist of two structural domains, F(1) containing the extramembraneous catalytic core and F(0) containing the membrane proton channel, linked together by a central stalk and a peripheral stalk. During catalysis, ATP synthesis in the catalytic domain of F(1) is coupled via a rotary mechanism of the central stalk subunits to proton translocation. In terms of biological role, component of the F(0) channel, it forms part of the peripheral stalk, linking F(1) to F(0). The polypeptide is ATP synthase subunit b 1 (Prosthecochloris aestuarii (strain DSM 271 / SK 413)).